Here is a 143-residue protein sequence, read N- to C-terminus: Large ribosomal subunit protein eL28y (143 aa).

Belongs to the eukaryotic ribosomal protein eL28 family.

The chain is Large ribosomal subunit protein eL28y (RPL28C) from Arabidopsis thaliana (Mouse-ear cress).